Consider the following 716-residue polypeptide: Splicing factor Cactin (716 aa).

The interval 1–104 is disordered; that stretch reads MGSHGKGKRD…SKKAQKKALR (104 aa). Positions 10-22 are enriched in basic and acidic residues; it reads DRSGRQKKRRDES. The segment covering 25-45 has biased composition (low complexity); it reads GSESESYTSDSDGSDDLSPPR. Basic residues predominate over residues 46–61; the sequence is SSRRKKGSSSRRTRRR. Residues 81–95 show a composition bias toward basic and acidic residues; it reads SSKDYSEEKVTEYMS. Positions 153–201 form a coiled coil; sequence SVKAEKRRHRERMTEVEKVKKRREERAVEKARHEEEMALLARERARAEF. Position 450 is a phosphoserine (S450). The tract at residues 466-525 is disordered; that stretch reads VEENEEEINDTNLSDAEEAFSPEPVAEEEEADEAAEAAGSFSPELMHGDDREEAIDPEED. The segment covering 468-500 has biased composition (acidic residues); sequence ENEEEINDTNLSDAEEAFSPEPVAEEEEADEAA.

This sequence belongs to the CACTIN family. In terms of assembly, interacts with At5g63440.

It is found in the nucleus speckle. Plays a role in pre-mRNA splicing by facilitating excision of a subset of introns. Required for embryogenesis. This chain is Splicing factor Cactin (CTN), found in Arabidopsis thaliana (Mouse-ear cress).